Here is a 193-residue protein sequence, read N- to C-terminus: Ion-translocating oxidoreductase complex subunit A (193 aa).

Transmembrane regions (helical) follow at residues L5–L25, F47–L67, L72–V92, L102–L122, A134–I154, and A171–V191.

It belongs to the NqrDE/RnfAE family. In terms of assembly, the complex is composed of six subunits: RsxA, RsxB, RsxC, RsxD, RsxE and RsxG.

The protein resides in the cell inner membrane. In terms of biological role, part of a membrane-bound complex that couples electron transfer with translocation of ions across the membrane. Required to maintain the reduced state of SoxR. In Escherichia coli O45:K1 (strain S88 / ExPEC), this protein is Ion-translocating oxidoreductase complex subunit A.